The sequence spans 321 residues: Biotin synthase (321 aa).

The region spanning 45–271 (FFGKKVKLNM…INPSKEIRIA (227 aa)) is the Radical SAM core domain. 3 residues coordinate [4Fe-4S] cluster: C63, C67, and C70. [2Fe-2S] cluster contacts are provided by C106, C139, C199, and R269.

This sequence belongs to the radical SAM superfamily. Biotin synthase family. In terms of assembly, homodimer. [4Fe-4S] cluster serves as cofactor. It depends on [2Fe-2S] cluster as a cofactor.

It carries out the reaction (4R,5S)-dethiobiotin + (sulfur carrier)-SH + 2 reduced [2Fe-2S]-[ferredoxin] + 2 S-adenosyl-L-methionine = (sulfur carrier)-H + biotin + 2 5'-deoxyadenosine + 2 L-methionine + 2 oxidized [2Fe-2S]-[ferredoxin]. It functions in the pathway cofactor biosynthesis; biotin biosynthesis; biotin from 7,8-diaminononanoate: step 2/2. In terms of biological role, catalyzes the conversion of dethiobiotin (DTB) to biotin by the insertion of a sulfur atom into dethiobiotin via a radical-based mechanism. This is Biotin synthase from Staphylococcus haemolyticus (strain JCSC1435).